The chain runs to 804 residues: MERQGAPLGPYRATKLWNEVTTSFRVGMPLRKHRQHLKKYSNCFTAVEAIDWLYDLLRSNSNFGPEVTRQQTIQLLRKFLKNHVIEDIKGRWGSESLDDNNQLFRFPATSPLKTFPQRHTEIKKTNTEYFSKDKDGIFKLRNLSQKTSKKRGLHFSQENTEKINHERITNEDLEIAPDNQEISQEDVEEVWRYVIMIYLQTILSLPSIEELLNPNQVIPQYIMYNMANTSKHGVVILQDKSDDLPHWVLSAMKCLANWPRSNDTNNLTYVGFERDVFKTIADYFLNLPEPLLTFEYYELFVNILVVCGYITVSDRTSGIHKIQDDPRSSKIHDLSNLNSFKSTECLLLSLLYKDKSNEELDSTKRLQRNDQGFQERCAKKMQLDNLRNRRASANDIMGGSCHNLIGLSNTNALSSNIKPRCSSLEGIVDRPVNSSEKKSSIFYQSVLNIEEQNSKQSLVSAPKQTPLFNLHSDENAQQPHCVGFNRTSALTVQDQEELCNEKYKSKQLCRSQSLLLRSSTRQNSCINKPVAEIIMKPNVGQGSTSELGESSTTINKRLCKSTIELSEKSLPPAASVLTGTQSLLQPHLERVAINALQLCCLLLPPPNRRKLQLLMRMISRMSQNVDMPKLHEQIGTRSLMINTFSRCVLCCAEEVDLDELLASRLVSFLMDHHQEILQVPTYLQAAVEKHLDYIKKGNVKNHGDGLVVPLPTYSYCKQISAKEFDEQKISTSQAAIAELLENIVRSKSLSLKEKRRKLKQKEYPLIYQKRFPTTESEAALFDDKPTIKQPMLNLRNPKLHSLRY.

The region spanning 24 to 108 (FRVGMPLRKH…DNNQLFRFPA (85 aa)) is the DEP domain. The 41-residue stretch at 282–322 (DYFLNLPEPLLTFEYYELFVNILVVCGYITVSDRTSGIHKI) folds into the Rho-GAP domain. Serine 513 is modified (phosphoserine). An interaction with ZNF224 region spans residues 592-647 (AINALQLCCLLLPPPNRRKLQLLMRMISRMSQNVDMPKLHEQIGTRSLMINTFSRC). A coiled-coil region spans residues 726-760 (EQKISTSQAAIAELLENIVRSKSLSLKEKRRKLKQ).

Can form dimers. Interacts with ZNF224.

It localises to the nucleus. Functionally, may be involved in transcriptional regulation as a transcriptional corepressor. The DEPDC1A-ZNF224 complex may play a critical role in bladder carcinogenesis by repressing the transcription of the A20 gene, leading to transport of NF-KB protein into the nucleus, resulting in suppression of apoptosis of bladder cancer cells. In Mus musculus (Mouse), this protein is DEP domain-containing protein 1A (Depdc1a).